A 371-amino-acid chain; its full sequence is Proton-coupled zinc antiporter SLC30A2 (371 aa).

At 1-69 (MQTMDKQNLL…DPEKQRARRK (69 aa)) the chain is on the cytoplasmic side. A Mitochondrial localization signal motif is present at residues 47 to 50 (HYCH). Cysteine 49 serves as a coordination point for Zn(2+). A helical transmembrane segment spans residues 70–90 (LYVASAICLVFMIGEIIGGYL). The Lumenal portion of the chain corresponds to 91–99 (AQSLAIMTD). A helical membrane pass occupies residues 100 to 120 (AAHLLTDFASMLISLFALWVS). Histidine 102 and aspartate 106 together coordinate Zn(2+). Over 121–136 (SRPATKTMNFGWHRAE) the chain is Cytoplasmic. The helical transmembrane segment at 137–157 (ILGALLSVLSIWVVTGVLVYL) threads the bilayer. Over 158–172 (AVQRLISGDYEIKGD) the chain is Lumenal. Residues 173 to 193 (TMLITSGCAVAVNLIMGLALH) form a helical membrane-spanning segment. Residues 194–219 (QSGHGHSHGNSRDDSSQQQNPSVRAA) lie on the Cytoplasmic side of the membrane. A helical membrane pass occupies residues 220-240 (FIHVIGDLLQSVGVLVAAYII). Residues histidine 222 and aspartate 226 each contribute to the Zn(2+) site. The Lumenal segment spans residues 241 to 248 (YFKPEYKY). Residues 249-269 (VDPICTFLFSILVLGTTLTIL) form a helical membrane-spanning segment. The Cytoplasmic portion of the chain corresponds to 270 to 303 (RDVILVLMEGTPKGVDFTTVKNLLLSVDGVEALH). The short motif at 293–294 (LL) is the Lysosomal targeting motif element. Serine 295 bears the Phosphoserine mark. Positions 303, 320, and 354 each coordinate Zn(2+). The chain crosses the membrane as a helical span at residues 304–324 (SLHIWALTVAQPVLSVHIAIA). At 325–371 (QNADAQAVLKVARDRLQGKFNFHTMTIQIEKYSEDMKNCQACQGPLE) the chain is on the lumenal side.

The protein belongs to the cation diffusion facilitator (CDF) transporter (TC 2.A.4) family. SLC30A subfamily. In terms of assembly, homodimer. Interacts (via lysosomal targeting motif) with AP3D1; in AP-3-mediated transport to lysosomes. Interacts with TMEM163. Phosphorylated at Ser-295. Phosphorylation at Ser-295 prevents localization to lysosomes. Dephosphorylation of Ser-295 which triggers localization to lysosomes, accumulation of zinc into lysosomes and lysosomal-mediated cell death is induced by TNF-alpha.

The protein localises to the cytoplasmic vesicle. It localises to the secretory vesicle membrane. It is found in the zymogen granule membrane. Its subcellular location is the endosome membrane. The protein resides in the lysosome membrane. The protein localises to the mitochondrion inner membrane. It localises to the cell membrane. The catalysed reaction is Zn(2+)(in) + 2 H(+)(out) = Zn(2+)(out) + 2 H(+)(in). In terms of biological role, electroneutral proton-coupled antiporter concentrating zinc ions into a variety of intracellular organelles including endosomes, zymogen granules and mitochondria. Thereby, plays a crucial role in cellular zinc homeostasis to confer upon cells protection against its potential cytotoxicity. Regulates the zinc concentration of milk, through the transport of zinc ions into secretory vesicles of mammary cells. By concentrating zinc ions into lysosomes participates to lysosomal-mediated cell death during early mammary gland involution. Functionally, electroneutral proton-coupled antiporter mediating the efflux of zinc ions through the plasma membrane. The sequence is that of Proton-coupled zinc antiporter SLC30A2 from Mus musculus (Mouse).